A 197-amino-acid polypeptide reads, in one-letter code: Recombination protein RecR (197 aa).

A C4-type zinc finger spans residues 57 to 72 (CSVCFGITEEDPCRLC). The region spanning 79 to 174 (TSLCVVEEPQ…RVTRLAHGIP (96 aa)) is the Toprim domain.

This sequence belongs to the RecR family.

Its function is as follows. May play a role in DNA repair. It seems to be involved in an RecBC-independent recombinational process of DNA repair. It may act with RecF and RecO. The protein is Recombination protein RecR of Geobacter metallireducens (strain ATCC 53774 / DSM 7210 / GS-15).